The following is a 487-amino-acid chain: Betaine aldehyde dehydrogenase (487 aa).

K(+)-binding residues include isoleucine 27 and aspartate 93. NAD(+) is bound at residue 149–151 (GAW). The Charge relay system role is filled by lysine 161. NAD(+) contacts are provided by residues 175 to 178 (KPSE) and 228 to 231 (SVPT). Leucine 243 is a K(+) binding site. Catalysis depends on glutamate 249, which acts as the Proton acceptor. Positions 251, 283, and 384 each coordinate NAD(+). Cysteine 283 acts as the Nucleophile in catalysis. Cysteine 283 carries the post-translational modification Cysteine sulfenic acid (-SOH). The K(+) site is built by lysine 454 and glycine 457. Glutamate 461 serves as the catalytic Charge relay system.

It belongs to the aldehyde dehydrogenase family. As to quaternary structure, dimer of dimers. K(+) serves as cofactor.

It catalyses the reaction betaine aldehyde + NAD(+) + H2O = glycine betaine + NADH + 2 H(+). It participates in amine and polyamine biosynthesis; betaine biosynthesis via choline pathway; betaine from betaine aldehyde: step 1/1. Functionally, involved in the biosynthesis of the osmoprotectant glycine betaine. Catalyzes the irreversible oxidation of betaine aldehyde to the corresponding acid. The sequence is that of Betaine aldehyde dehydrogenase from Brucella abortus (strain S19).